Here is a 116-residue protein sequence, read N- to C-terminus: Protein Wnt-5b (116 aa).

Serine 1 is lipidated: O-palmitoleoyl serine; by PORCN. 2 N-linked (GlcNAc...) asparagine glycosylation sites follow: asparagine 69 and asparagine 83. A disulfide bond links cysteine 82 and cysteine 97.

Belongs to the Wnt family. Post-translationally, palmitoleoylation is required for efficient binding to frizzled receptors. Depalmitoleoylation leads to Wnt signaling pathway inhibition.

The protein localises to the secreted. It is found in the extracellular space. It localises to the extracellular matrix. Ligand for members of the frizzled family of seven transmembrane receptors. Probable developmental protein. May be a signaling molecule which affects the development of discrete regions of tissues. Is likely to signal over only few cell diameters. This is Protein Wnt-5b (WNT-5B) from Plestiodon skiltonianus (Western skink).